Reading from the N-terminus, the 232-residue chain is Large ribosomal subunit protein uL1 (232 aa).

It belongs to the universal ribosomal protein uL1 family. Part of the 50S ribosomal subunit.

Its function is as follows. Binds directly to 23S rRNA. The L1 stalk is quite mobile in the ribosome, and is involved in E site tRNA release. Protein L1 is also a translational repressor protein, it controls the translation of the L11 operon by binding to its mRNA. The chain is Large ribosomal subunit protein uL1 from Bartonella henselae (strain ATCC 49882 / DSM 28221 / CCUG 30454 / Houston 1) (Rochalimaea henselae).